The chain runs to 261 residues: Indole-3-glycerol phosphate synthase (261 aa).

It belongs to the TrpC family.

It carries out the reaction 1-(2-carboxyphenylamino)-1-deoxy-D-ribulose 5-phosphate + H(+) = (1S,2R)-1-C-(indol-3-yl)glycerol 3-phosphate + CO2 + H2O. It functions in the pathway amino-acid biosynthesis; L-tryptophan biosynthesis; L-tryptophan from chorismate: step 4/5. This is Indole-3-glycerol phosphate synthase from Burkholderia cenocepacia (strain HI2424).